Consider the following 436-residue polypeptide: uncharacterized protein (436 aa).

A run of 12 helical transmembrane segments spans residues 38-58 (ILIF…TVGA), 70-90 (VAGI…LLIG), 102-122 (LAGG…AALI), 125-145 (VALL…NLQV), 160-180 (TAAS…PNLV), 197-217 (GPFI…LIFL), 254-274 (IMVG…IMTM), 291-311 (LVIG…GLLV), 319-339 (MAIA…IAPA), 342-362 (LSLL…GLLT), 383-403 (FDVL…MVVA), and 409-429 (ILSI…IWYF).

The protein belongs to the major facilitator superfamily.

It localises to the cell membrane. This is an uncharacterized protein from Bacillus subtilis (strain 168).